The chain runs to 967 residues: RNA polymerase-associated protein RapA (967 aa).

The Helicase ATP-binding domain occupies 163–333 (EVGQRHAPRV…FARLRLLDPN (171 aa)). Residue 176–183 (DEVGLGKT) coordinates ATP. Positions 279–282 (DEAH) match the DEAH box motif. The 155-residue stretch at 489–643 (RVEWLLNYLT…TCPTGRTIYD (155 aa)) folds into the Helicase C-terminal domain.

It belongs to the SNF2/RAD54 helicase family. RapA subfamily. In terms of assembly, interacts with the RNAP. Has a higher affinity for the core RNAP than for the holoenzyme. Its ATPase activity is stimulated by binding to RNAP.

Functionally, transcription regulator that activates transcription by stimulating RNA polymerase (RNAP) recycling in case of stress conditions such as supercoiled DNA or high salt concentrations. Probably acts by releasing the RNAP, when it is trapped or immobilized on tightly supercoiled DNA. Does not activate transcription on linear DNA. Probably not involved in DNA repair. This is RNA polymerase-associated protein RapA from Pectobacterium carotovorum subsp. carotovorum (strain PC1).